The sequence spans 3483 residues: Nonribosomal peptide synthetase Ao415 (3483 aa).

The tract at residues 281 to 669 (TFKKLNETSN…DVHPLIKDVV (389 aa)) is adenylation 1. Residues 775-851 (EVFDELSTKI…GLRDHVSGKK (77 aa)) enclose the Carrier 1 domain. The residue at position 812 (Ser812) is an O-(pantetheine 4'-phosphoryl)serine. The condensation 1 stretch occupies residues 886–1297 (ANVLPCSPMQ…YCLLHMLQNQ (412 aa)). Residues 1363-1758 (TYRQFDDMGN…SADKDVAEIV (396 aa)) are adenylation 2. One can recognise a Carrier 2 domain in the interval 1865–1941 (EELSETEKVI…SLAKALSSAN (77 aa)). Ser1901 is modified (O-(pantetheine 4'-phosphoryl)serine). The segment at 1981 to 2379 (IKPCTPLQEG…LLKNPEQEVA (399 aa)) is condensation 2. The 74-residue stretch at 2412–2485 (TEAAVSIRRE…RMVVYLSSTK (74 aa)) folds into the Carrier 3 domain. Ser2446 carries the O-(pantetheine 4'-phosphoryl)serine modification. A condensation 3 region spans residues 2520 to 2917 (ESILPTTPLQ…MLQKIIGNPL (398 aa)). A Carrier 4 domain is found at 2954 to 3030 (DNYQNLERQV…KICLFLDKKQ (77 aa)). Ser2991 is subject to O-(pantetheine 4'-phosphoryl)serine. The condensation 4 stretch occupies residues 3084 to 3368 (SEGRIFLPTF…VQEDLLKIST (285 aa)).

This sequence belongs to the NRP synthetase family.

It functions in the pathway siderophore biosynthesis. In terms of biological role, nonribosomal peptide synthetase; part of the gene cluster that mediates the biosynthesis of desferriferrichrome that chelates Fe(3+) to form ferrichrome. Fe(3+) is a key factor for induction of trap formation and the fungus uses the iron chelating desferriferrichrome to sequester Fe(3+) to inhibit trap formation and increase nematicidal activity. The biosynthesis of desferriferrichrome requires the action of the L-ornithine N(5)-oxygenase (LOO) Ao414 that hydroxylates L-ornithine at N(5), resulting in the formation of N(5)-hydroxyl-L-ornithine, which is subsequently N-acetylated to yield N(5)-acetyl-N(5)-hydroxy-L-ornithine (L-AHO). L-AHO harbors one hydroxamate moiety, which is the key core responsible for chelating iron. Then, L-AHO is further condensated with glycines to form desferriferrichrome through the NRPS protein Ao415. The polypeptide is Nonribosomal peptide synthetase Ao415 (Arthrobotrys oligospora (strain ATCC 24927 / CBS 115.81 / DSM 1491) (Nematode-trapping fungus)).